The chain runs to 695 residues: Biosynthetic arginine decarboxylase 1 (695 aa).

K141 carries the N6-(pyridoxal phosphate)lysine modification. Residue 332-342 (LDVGGGLGVDY) participates in substrate binding.

The protein belongs to the Orn/Lys/Arg decarboxylase class-II family. SpeA subfamily. Requires Mg(2+) as cofactor. Pyridoxal 5'-phosphate is required as a cofactor.

The enzyme catalyses L-arginine + H(+) = agmatine + CO2. Its function is as follows. Catalyzes the biosynthesis of agmatine from arginine. The protein is Biosynthetic arginine decarboxylase 1 (speA1) of Synechocystis sp. (strain ATCC 27184 / PCC 6803 / Kazusa).